The sequence spans 614 residues: Adenylate kinase 7 (614 aa).

The segment at 258-503 is adenylate kinase; it reads PIKICILGPP…KEIGKPRNYG (246 aa). 268–273 contributes to the ATP binding site; the sequence is AVGKSS. The interval 288–346 is NMP; sequence KMKDVIAEAIAKLEAIVAPKDSVEGEEEGEEEEEEENVDDAQELLDGIKESMEQNAGRL. The segment at 308–327 is disordered; sequence DSVEGEEEGEEEEEEENVDD. Residues 311–327 are compositionally biased toward acidic residues; sequence EGEEEGEEEEEEENVDD. Residues 323–346, 373–376, and Q380 contribute to the AMP site; these read ENVD…AGRL and GFPK. A coiled-coil region spans residues 376–568; it reads KTYDQAKDLF…EERELLEVQS (193 aa). Residues 428–438 form an LID region; it reads NLPESVVAGTH. R446 is an AMP binding site. Residue G478 coordinates ATP. Positions 570 to 614 are DPY-30; that stretch reads PLRNYLMTYVMPTLMQGLNECCKVRPEDPVDFLAEYLFKNNPEMQ.

In the central section; belongs to the adenylate kinase family. The protein in the C-terminal section; belongs to the dpy-30 family.

It localises to the cytoplasm. The protein resides in the cytosol. The protein localises to the cell projection. It is found in the cilium. Its subcellular location is the flagellum. It catalyses the reaction AMP + ATP = 2 ADP. The catalysed reaction is a 2'-deoxyribonucleoside 5'-diphosphate + ATP = a 2'-deoxyribonucleoside 5'-triphosphate + ADP. The enzyme catalyses a ribonucleoside 5'-diphosphate + ATP = a ribonucleoside 5'-triphosphate + ADP. Nucleoside monophosphate (NMP) kinase that catalyzes the reversible transfer of the terminal phosphate group between nucleoside triphosphates and monophosphates. Has highest activity toward AMP, and weaker activity toward dAMP, CMP and dCMP. Also displays broad nucleoside diphosphate kinase activity. Involved in maintaining ciliary structure and function. This is Adenylate kinase 7 (Ak7) from Mus musculus (Mouse).